Reading from the N-terminus, the 422-residue chain is Replication factor C large subunit (422 aa).

63 to 70 lines the ATP pocket; sequence GPPGVGKT.

Belongs to the activator 1 small subunits family. RfcL subfamily. As to quaternary structure, heteromultimer composed of small subunits (RfcS) and large subunits (RfcL).

In terms of biological role, part of the RFC clamp loader complex which loads the PCNA sliding clamp onto DNA. The protein is Replication factor C large subunit of Pyrobaculum arsenaticum (strain DSM 13514 / JCM 11321 / PZ6).